The following is a 1401-amino-acid chain: MAP kinase kinase kinase wis4 (1401 aa).

2 disordered regions span residues 67 to 99 and 176 to 205; these read HIPLTPSHSGQSEKLMSTRTSHSPYISPTMSYT and QDSISDKSLPSTNQSLHHSEEDTESDNDFS. Composition is skewed to polar residues over residues 72-99 and 176-191; these read PSHSGQSEKLMSTRTSHSPYISPTMSYT and QDSISDKSLPSTNQSL. One can recognise a Protein kinase domain in the interval 1037-1306; sequence WQQGHFVRSG…AVDLLTHPWI (270 aa). ATP-binding positions include 1043–1051 and K1066; that span reads VRSGMFGDV. D1161 acts as the Proton acceptor in catalysis.

The protein belongs to the protein kinase superfamily. STE Ser/Thr protein kinase family. MAP kinase kinase kinase subfamily.

It catalyses the reaction L-seryl-[protein] + ATP = O-phospho-L-seryl-[protein] + ADP + H(+). The catalysed reaction is L-threonyl-[protein] + ATP = O-phospho-L-threonyl-[protein] + ADP + H(+). In terms of biological role, involved in a signal transduction pathway that is activated in under conditions of heat shock, oxidative stress or limited nutrition. Unlike win1, it is not activated by changes in the osmolarity of the extracellular environment. Activates the wis1 MAP kinase kinase by phosphorylation. The protein is MAP kinase kinase kinase wis4 (wis4) of Schizosaccharomyces pombe (strain 972 / ATCC 24843) (Fission yeast).